The sequence spans 103 residues: c-Myc-binding protein (103 aa).

The protein belongs to the AMY1 family. Binds via its C-terminal region to the N-terminal region of MYC. Associates with AKAP1/S-AKAP84. Interacts with MYCBPAP. Interacts with CFAP91.

The protein localises to the cytoplasm. The protein resides in the nucleus. Functionally, may control the transcriptional activity of MYC. Stimulates the activation of E box-dependent transcription by MYC. In Mus musculus (Mouse), this protein is c-Myc-binding protein (Mycbp).